The chain runs to 359 residues: Fructose-bisphosphate aldolase class 2 (359 aa).

A D-glyceraldehyde 3-phosphate-binding site is contributed by Ser-61. Residue Asp-110 is the Proton donor of the active site. Zn(2+)-binding residues include His-111, Asp-145, Glu-175, and His-227. Gly-228 serves as a coordination point for dihydroxyacetone phosphate. His-265 contributes to the Zn(2+) binding site. Dihydroxyacetone phosphate is bound by residues 266-268 (GGS) and 287-290 (NIDT).

Belongs to the class II fructose-bisphosphate aldolase family. Zn(2+) is required as a cofactor.

The catalysed reaction is beta-D-fructose 1,6-bisphosphate = D-glyceraldehyde 3-phosphate + dihydroxyacetone phosphate. Its pathway is carbohydrate degradation; glycolysis; D-glyceraldehyde 3-phosphate and glycerone phosphate from D-glucose: step 4/4. Functionally, catalyzes the aldol condensation of dihydroxyacetone phosphate (DHAP or glycerone-phosphate) with glyceraldehyde 3-phosphate (G3P) to form fructose 1,6-bisphosphate (FBP) in gluconeogenesis and the reverse reaction in glycolysis. This Buchnera aphidicola subsp. Schizaphis graminum (strain Sg) protein is Fructose-bisphosphate aldolase class 2 (fbaA).